Here is a 537-residue protein sequence, read N- to C-terminus: Protein disulfide isomerase-like 1-5 (537 aa).

Residues 1–29 form the signal peptide; sequence MSLIPKPISKVSTFTFILLILLSFTIIIA. The 127-residue stretch at 58 to 184 folds into the Thioredoxin 1 domain; that stretch reads LQEDRPEQQS…IVIWVQKKTG (127 aa). Catalysis depends on Cys-106, which acts as the Nucleophile. 3 N-linked (GlcNAc...) asparagine glycosylation sites follow: Asn-160, Asn-364, and Asn-416. The region spanning 380–526 is the Thioredoxin 2 domain; the sequence is LLESDPSPNS…IAVFINEELL (147 aa). Catalysis depends on nucleophile residues Cys-447 and Cys-450. Residues Cys-447 and Cys-450 are joined by a disulfide bond. Asn-530 carries an N-linked (GlcNAc...) asparagine glycan. The Prevents secretion from ER motif lies at 534-537; it reads KDEL.

This sequence belongs to the protein disulfide isomerase family. In terms of tissue distribution, widely expressed.

It localises to the endoplasmic reticulum lumen. The enzyme catalyses Catalyzes the rearrangement of -S-S- bonds in proteins.. Functionally, acts as a protein-folding catalyst that interacts with nascent polypeptides to catalyze the formation, isomerization, and reduction or oxidation of disulfide bonds. This Arabidopsis thaliana (Mouse-ear cress) protein is Protein disulfide isomerase-like 1-5 (PDIL1-5).